The following is a 180-amino-acid chain: Large ribosomal subunit protein uL5c (180 aa).

The protein belongs to the universal ribosomal protein uL5 family. Part of the 50S ribosomal subunit; contacts the 5S rRNA.

The protein localises to the plastid. It is found in the chloroplast. Functionally, binds 5S rRNA, forms part of the central protuberance of the 50S subunit. This Oltmannsiellopsis viridis (Marine flagellate) protein is Large ribosomal subunit protein uL5c (rpl5).